Reading from the N-terminus, the 383-residue chain is Succinyl-diaminopimelate desuccinylase (383 aa).

Residue histidine 73 coordinates Zn(2+). Residue aspartate 75 is part of the active site. Residue aspartate 107 coordinates Zn(2+). Glutamate 141 (proton acceptor) is an active-site residue. 3 residues coordinate Zn(2+): glutamate 142, glutamate 170, and histidine 356.

The protein belongs to the peptidase M20A family. DapE subfamily. In terms of assembly, homodimer. The cofactor is Zn(2+). Co(2+) serves as cofactor.

It catalyses the reaction N-succinyl-(2S,6S)-2,6-diaminopimelate + H2O = (2S,6S)-2,6-diaminopimelate + succinate. It participates in amino-acid biosynthesis; L-lysine biosynthesis via DAP pathway; LL-2,6-diaminopimelate from (S)-tetrahydrodipicolinate (succinylase route): step 3/3. Functionally, catalyzes the hydrolysis of N-succinyl-L,L-diaminopimelic acid (SDAP), forming succinate and LL-2,6-diaminopimelate (DAP), an intermediate involved in the bacterial biosynthesis of lysine and meso-diaminopimelic acid, an essential component of bacterial cell walls. This is Succinyl-diaminopimelate desuccinylase from Pseudomonas aeruginosa (strain UCBPP-PA14).